Consider the following 330-residue polypeptide: MKDKAYDITIIGGGPIGLFAAFYAGLRGVTVKIIESLSELGGQPAILYPEKMIYDIPAYPSLTGVELTENLIKQLSRFEDRTTICLKEEVLTFDKVKGGFSIRTNKAEHFSKAIIIACGNGAFAPRTLGLESEENFADHNLFYNVHQLDQFAGQKVVICGGGDSAVDWALALEDIAESVTVVHRRDAFRAHEHSVELLKASTVNLLTPYVPKALKGIGNLAEKLVIQKVKEDEVLELELDSLIVSFGFSTSNKNLKNWNLDYKRSSITVSPLFQTSQEGIFAIGDAAAYNGKVDLIATGFGEAPTAVNQAINYIYPDRDNRVVHSTSLID.

Residues glutamate 35, glutamine 43, tyrosine 48, valine 90, phenylalanine 123, aspartate 285, and threonine 326 each contribute to the FAD site.

The protein belongs to the ferredoxin--NADP reductase type 2 family. Homodimer. FAD serves as cofactor.

The enzyme catalyses 2 reduced [2Fe-2S]-[ferredoxin] + NADP(+) + H(+) = 2 oxidized [2Fe-2S]-[ferredoxin] + NADPH. In Streptococcus pyogenes serotype M1, this protein is Ferredoxin--NADP reductase.